Reading from the N-terminus, the 291-residue chain is Basic helix-loop-helix protein 80 (291 aa).

Positions 65–120 (SAVLDTSPSVDRKRKAAEDSAHSKDSCKDGKSRRGKKASKEVEEKSTTEDEPPKGY) are disordered. Over residues 80-117 (AAEDSAHSKDSCKDGKSRRGKKASKEVEEKSTTEDEPP) the composition is skewed to basic and acidic residues. The Nuclear localization signal motif lies at 125–132 (ARRGQATD). The interval 129-142 (QATDSHSLAERVRR) is basic motif; degenerate. One can recognise a bHLH domain in the interval 129–179 (QATDSHSLAERVRRERISERMRMLQALVPGCDKVTGKALILDEIINYVQSL). Positions 143 to 179 (ERISERMRMLQALVPGCDKVTGKALILDEIINYVQSL) are helix-loop-helix motif.

It belongs to the bHLH protein family. Homodimer. Interacts with IBH1, BC1 and LO9-177.

It localises to the nucleus. In terms of biological role, together with BCL2, positive regulator of cell elongation at least partially through increased gibberellic acid (GA) biosynthesis. The protein is Basic helix-loop-helix protein 80 of Oryza sativa subsp. indica (Rice).